The following is a 93-amino-acid chain: Sec-independent protein translocase protein TatA (93 aa).

A helical membrane pass occupies residues 1-21 (MGAMSPWHWAIVALVVVILFG). Positions 44 to 93 (KEMQNDNSTPAPTAQQSAPAELPVADTTTAPVTPPAPVQPQPQHTEPKSA) are disordered. Over residues 51 to 74 (STPAPTAQQSAPAELPVADTTTAP) the composition is skewed to low complexity.

Belongs to the TatA/E family. The Tat system comprises two distinct complexes: a TatABC complex, containing multiple copies of TatA, TatB and TatC subunits, and a separate TatA complex, containing only TatA subunits. Substrates initially bind to the TatABC complex, which probably triggers association of the separate TatA complex to form the active translocon.

The protein localises to the cell membrane. Its function is as follows. Part of the twin-arginine translocation (Tat) system that transports large folded proteins containing a characteristic twin-arginine motif in their signal peptide across membranes. TatA could form the protein-conducting channel of the Tat system. The sequence is that of Sec-independent protein translocase protein TatA from Rhodococcus opacus (strain B4).